Here is a 205-residue protein sequence, read N- to C-terminus: Alpha-1-acid glycoprotein (205 aa).

The signal sequence occupies residues 1–18; the sequence is MALHMVLVVLSLLPLLEA. 6 N-linked (GlcNAc...) asparagine glycosylation sites follow: asparagine 25, asparagine 34, asparagine 76, asparagine 94, asparagine 104, and asparagine 134. A disulfide bond links cysteine 91 and cysteine 183.

It belongs to the calycin superfamily. Lipocalin family.

It is found in the secreted. In terms of biological role, functions as a transport protein in the blood stream. Binds various ligands in the interior of its beta-barrel domain. Appears to function in modulating the activity of the immune system during the acute-phase reaction. The sequence is that of Alpha-1-acid glycoprotein (Orm1) from Rattus norvegicus (Rat).